Here is a 379-residue protein sequence, read N- to C-terminus: Cyclic dinucleotide synthase CdnE (379 aa).

The UTP site is built by Gln107, Ser109, Asp123, and Lys179. Mg(2+) is bound at residue Asp123. Asp193 contacts Mg(2+). UTP-binding residues include Asn229, Lys257, and Ser274. The Pyrimidine specificity motif (R/Q)xW in donor pocket motif lies at 328-330; sequence KIF.

This sequence belongs to the CD-NTase family. E02 subfamily. The cofactor is Mg(2+).

The catalysed reaction is 2 UTP = c-di-UMP + 2 diphosphate. The enzyme catalyses UTP + ATP = 3',3'-cUAMP + 2 diphosphate. It catalyses the reaction UTP + CTP = cyclic CMP-UMP + 2 diphosphate. In terms of biological role, cyclic nucleotide synthase (second messenger synthase) of a CBASS antivirus system. CBASS (cyclic oligonucleotide-based antiphage signaling system) provides immunity against bacteriophage. The CD-NTase protein synthesizes cyclic nucleotides in response to infection; these serve as specific second messenger signals. The signals activate a diverse range of effectors, leading to bacterial cell death and thus abortive phage infection. The effector protein for this system is membrane protein Cap15. A type I-B(UU) CBASS system. Cyclic dinucleotide synthase that preferentially catalyzes the synthesis of 3',3'-cyclic UMP-UMP (c-di-UMP) and 3',3'-cyclic UMP-AMP, with minor amounts of 3',3'-cyclic UMP-CMP, which are second messengers for cell signal transduction. Its function is as follows. Protects E.coli against phage infection. When the CBASS operon (cap15-cdnE) is introduced in E.coli MG1655 it protects against phages T2, T4, T5, T6, SECPhi4, SECPhi6, SECPhi17, SECPhi18 and SECPhi27, but not against phage T7. The sequence is that of Cyclic dinucleotide synthase CdnE from Yersinia aleksiciae.